Here is a 273-residue protein sequence, read N- to C-terminus: GDNF family receptor alpha-4 (273 aa).

N-linked (GlcNAc...) asparagine glycosylation occurs at asparagine 192. Asparagine 250 carries GPI-anchor amidated asparagine lipidation. Positions 251–273 (AGCCFLWVSSMSILTALALQALL) are cleaved as a propeptide — removed in mature form.

Belongs to the GDNFR family. Interacts with ARTN ligand and RET: forms a 2:2:2 ternary complex composed of ARTN ligand, GFRA3 and RET receptor. Interacts with SORL1. As to expression, weakly expressed in heart, brain and testis.

Its subcellular location is the cell membrane. It localises to the secreted. Functionally, receptor for persephin (PSPN), a growth factor that exhibits neurotrophic activity on mesencephalic dopaminergic and motor neurons. Acts by binding to its coreceptor, GFRA4, leading to autophosphorylation and activation of the RET receptor. May be important in C-cell development and, in the postnatal development of the adrenal medulla. This Rattus norvegicus (Rat) protein is GDNF family receptor alpha-4 (Gfra4).